A 1088-amino-acid chain; its full sequence is Sterol regulatory element-binding protein 2 (1088 aa).

Residues 1–38 are transcriptional activation (acidic); sequence METLTELGDELTLGDIDEMLQFVSNQVGEFPDLFEEQL. Residues 1-440 lie on the Cytoplasmic side of the membrane; that stretch reads METLTELGDE…TGLGMMDRSR (440 aa). Residues 59-70 are compositionally biased toward polar residues; it reads AAQQPYTTSAPQ. The disordered stretch occupies residues 59–87; that stretch reads AAQQPYTTSAPQPQLLPVKAPPQATPQRT. Residues 290–340 form the bHLH domain; the sequence is ERRTTHNIIEKRYRSSINDKIMELKDLVMGTDAKMHKSGVLKKAIDYIKYL. Positions 340–361 are leucine-zipper; that stretch reads LQQVNQKLRQENMALKLANQKN. Residues 392-431 form a disordered region; it reads SPPASDSGSPAVFSPYSVDSEPGSPLLDDEKVKDEPDSPT. Residues 441 to 461 traverse the membrane as a helical segment; it reads MLLCTMTFLCLSFNPLTSLLH. At 462-494 the chain is on the lumenal side; the sequence is PESGQYSERAVQHGTGRTMLGVEMSGFYGSWFD. The chain crosses the membrane as a helical span at residues 495–515; sequence WLIPTIILWLVNGVIVLSVFM. Topologically, residues 516–1088 are cytoplasmic; sequence KLLIHGEPVT…LSGGTAMAAS (573 aa).

This sequence belongs to the SREBP family. As to quaternary structure, forms a tight complex with scap, the SCAP-SREBP complex, in the endoplasmic reticulum membrane. In terms of assembly, homodimer; efficient DNA binding of the soluble transcription factor fragment requires dimerization with another bHLH protein. In terms of processing, processed in the Golgi apparatus, releasing the protein from the membrane. At low cholesterol the SCAP-SREBP complex is recruited into COPII vesicles for export from the endoplasmic reticulum. In the Golgi, complex SREBPs are cleaved sequentially by site-1 (MBTPS1, S1P) and site-2 (MBTPS2, S2P) proteases. The first cleavage by site-1 protease occurs within the luminal loop, the second cleavage by site-2 protease occurs within the first transmembrane domain, releasing the transcription factor from the Golgi membrane.

Its subcellular location is the endoplasmic reticulum membrane. The protein resides in the golgi apparatus membrane. The protein localises to the cytoplasmic vesicle. It is found in the COPII-coated vesicle membrane. It localises to the nucleus. In terms of biological role, precursor of the transcription factor form (Processed sterol regulatory element-binding protein 2), which is embedded in the endoplasmic reticulum membrane. Low sterol concentrations promote processing of this form, releasing the transcription factor form that translocates into the nucleus and activates transcription of genes involved in cholesterol biosynthesis. Its function is as follows. Key transcription factor that regulates expression of genes involved in cholesterol biosynthesis. Binds to the sterol regulatory element 1 (SRE-1) (5'-ATCACCCCAC-3'). Has dual sequence specificity binding to both an E-box motif (5'-ATCACGTGA-3') and to SRE-1 (5'-ATCACCCCAC-3'). Regulates transcription of genes related to cholesterol synthesis pathway. This chain is Sterol regulatory element-binding protein 2, found in Xenopus laevis (African clawed frog).